We begin with the raw amino-acid sequence, 341 residues long: MQIVQIEQAPKDYISDIKIIPSKSLLLITSWDGSLTVYKFDIQAKNVDLLQSLRYKHPLLCCNFIDNTDLQIYVGTVQGEILKVDLIGSPSFQALTNNEANLGICRICKYGDDKLIAASWDGLIEVIDPRNYGDGVIAVKNLNSNNTKVKNKIFTMDTNSSRLIVGMNNSQVQWFRLPLCEDDNGTIEESGLKYQIRDVALLPKEQEGYACSSIDGRVAVEFFDDQGDDYNSSKRFAFRCHRLNLKDTNLAYPVNSIEFSPRHKFLYTAGSDGIISCWNLQTRKKIKNFAKFNEDSVVKIACSDNILCLATSDDTFKTNAAIDQTIELNASSIYIIFDYEN.

7 WD repeats span residues alanine 9 to aspartate 48, arginine 54 to threonine 96, asparagine 97 to isoleucine 137, serine 144 to glycine 185, glycine 191 to serine 233, asparagine 249 to asparagine 288, and phenylalanine 292 to asparagine 329.

Belongs to the WD repeat BUB3 family. Component of the mitotic checkpoint complex (MCC) which consists of MAD2, MAD3, BUB3 and CDC20. Part of complex consisting of MAD1, BUB1 and BUB3 after activation of spindle checkpoint. Part of the BUB1-BUB3 complex, composed of BUB1 and BUB3. Interacts with SPC105 (via phosphorylated MELT motifs); the interaction is direct and occurs when part of the BUB1-BUB3 complex. Interacts with MAD3; the interaction is direct. In terms of processing, phosphorylated by BUB1.

Its subcellular location is the nucleus. It localises to the chromosome. The protein localises to the centromere. It is found in the kinetochore. Its function is as follows. Involved in mitotic spindle assembly checkpoint signaling, a process that delays anaphase until chromosomes are bioriented on the spindle, and in the repair of incorrect mitotic kinetochore-spindle microtubule attachments. Component of the mitotic checkpoint complex (MCC) which inhibits the ubiquitin ligase activity of the anaphase promoting complex/cyclosome (APC/C) by preventing its activation by CDC20. The sequence is that of Spindle assembly checkpoint protein BUB3 (BUB3) from Saccharomyces cerevisiae (strain ATCC 204508 / S288c) (Baker's yeast).